The following is a 189-amino-acid chain: T cell receptor gamma constant 2 (189 aa).

In terms of domain architecture, Ig-like spans 10 to 104 (PKPTIFLPSI…NKNGIDQEII (95 aa)). The cysteines at positions 32 and 88 are disulfide-linked. N66, N120, N136, N142, and N151 each carry an N-linked (GlcNAc...) asparagine glycan. A helical transmembrane segment spans residues 155-177 (YYTYLLLLLKSVVYFAIITCCLL).

As to quaternary structure, gamma-delta TR is a heterodimer composed of a gamma and delta chain; disulfide-linked. The gamma-delta TR is associated with the transmembrane signaling CD3 coreceptor proteins following the stoichiometry: a single gamma-delta TR heterodimer associates with one CD3D-CD3E heterodimer, one CD3G-CD3E heterodimer and one CD247 homodimer forming a stable octameric structure. Upon activation, gamma-delta TR complex associates with FCER1G to initiate intracellular signaling.

Its subcellular location is the cell membrane. Its function is as follows. Constant region of T cell receptor (TR) gamma chain that participates in the antigen recognition. Gamma-delta TRs recognize a variety of self and foreign non-peptide antigens frequently expressed at the epithelial boundaries between the host and external environment, including endogenous lipids presented by MH-like protein CD1D and phosphoantigens presented by butyrophilin-like molecule BTN3A1. Upon antigen recognition induces rapid, innate-like immune responses involved in pathogen clearance and tissue repair. Binding of gamma-delta TR complex to antigen triggers phosphorylation of immunoreceptor tyrosine-based activation motifs (ITAMs) in the CD3 chains by the LCK and FYN kinases, allowing the recruitment, phosphorylation, and activation of ZAP70 that facilitates phosphorylation of the scaffolding proteins LCP2 and LAT. This lead to the formation of a supramolecular signalosome that recruits the phospholipase PLCG1, resulting in calcium mobilization and ERK activation, ultimately leading to T cell expansion and differentiation into effector cells. Gamma-delta TRs are produced through somatic rearrangement of a limited repertoire of variable (V), diversity (D), and joining (J) genes. The potential diversity of gamma-delta TRs is conferred by the unique ability to rearrange (D) genes in tandem and to utilize all three reading frames. The combinatorial diversity is considerably increased by the sequence exonuclease trimming and random nucleotide (N) region additions which occur during the V-(D)-J rearrangements. The chain is T cell receptor gamma constant 2 from Homo sapiens (Human).